A 214-amino-acid chain; its full sequence is Riboflavin kinase (214 aa).

The segment at 1–27 (MRPDRPRDPVTGPDEGPESPYPIRMSG) is disordered. T44 and N46 together coordinate Mg(2+). E101 functions as the Nucleophile in the catalytic mechanism.

The protein belongs to the flavokinase family. It depends on Zn(2+) as a cofactor. The cofactor is Mg(2+).

The catalysed reaction is riboflavin + ATP = FMN + ADP + H(+). It participates in cofactor biosynthesis; FMN biosynthesis; FMN from riboflavin (ATP route): step 1/1. In terms of biological role, catalyzes the phosphorylation of riboflavin (vitamin B2) to form flavin mononucleotide (FMN) coenzyme. This Aspergillus niger (strain ATCC MYA-4892 / CBS 513.88 / FGSC A1513) protein is Riboflavin kinase (fmn1).